The primary structure comprises 1207 residues: AP-3 complex subunit delta-1 (1207 aa).

Position 2 is an N-acetylalanine (Ala2). HEAT repeat units lie at residues 34–71, 142–179, 180–216, 218–254, 257–296, 298–336, 337–373, 375–409, and 521–558; these read KYIS…LGYD, DLAR…KYPE, SLRP…RNPK, YLSL…LEPR, KKLI…GMPN, SASI…THPK, SVQA…KKNL, EIVK…QSNY, and VYVQ…ERLP. Disordered regions lie at residues 630–695 and 731–970; these read PLSD…RYQD and RRHR…EEPL. Phosphoserine occurs at positions 632, 634, and 636. The span at 648–675 shows a compositional bias: basic and acidic residues; that stretch reads EEQRHTKPRAPEADEQELARRREARRQE. Residues 659-679 adopt a coiled-coil conformation; it reads EADEQELARRREARRQEQANN. Ser688 bears the Phosphoserine mark. The stretch at 725–752 forms a coiled coil; that stretch reads VKLEEERRHRQRLEKDKRKKKKRERERR. Over residues 731–740 the composition is skewed to basic and acidic residues; the sequence is RRHRQRLEKD. Residues 741–759 show a composition bias toward basic residues; the sequence is KRKKKKRERERRGTRRHSS. Ser758 and Ser759 each carry phosphoserine. Residue Thr762 is modified to Phosphothreonine. Ser764, Ser788, and Ser829 each carry phosphoserine. Residues 777–794 show a composition bias toward acidic residues; the sequence is VTEEMPENALPSDEDDKD. Residues 795–840 are compositionally biased toward basic and acidic residues; it reads PNDPYRALDIDLDKPLADSEKLPVQKHRNAETSKSPEKEDVPLVEK. A compositionally biased stretch (basic residues) spans 841–854; it reads KSKKPKKKEKKHKE. Residues 846–870 are a coiled coil; it reads KKKEKKHKEKEREKKKKEVEKGEDL. 2 stretches are compositionally biased toward basic and acidic residues: residues 855–869 and 899–908; these read KERE…KGED and EGQEEPRGEE. Over residues 923–933 the composition is skewed to basic residues; that stretch reads PSKHKKKKHKK. The segment covering 952–969 has biased composition (acidic residues); that stretch reads ADEEAAEPVENGTLEEEP.

The protein belongs to the adaptor complexes large subunit family. In terms of assembly, AP-3 associates with the BLOC-1 complex. Adaptor protein complex 3 (AP-3) is a heterotetramer composed of two large adaptins (delta-type subunit AP3D1 and beta-type subunit AP3B1 or AP3B2), a medium adaptin (mu-type subunit AP3M1 or AP3M2) and a small adaptin (sigma-type subunit APS1 or AP3S2). Interacts with SLC30A2. Interacts with CLN3 (via dileucine motif); this interaction facilitates lysosomal targeting.

The protein resides in the cytoplasm. It localises to the golgi apparatus membrane. Functionally, part of the AP-3 complex, an adaptor-related complex which is not clathrin-associated. The complex is associated with the Golgi region as well as more peripheral structures. It facilitates the budding of vesicles from the Golgi membrane and may be directly involved in trafficking to lysosomes. Involved in process of CD8+ T-cell and NK cell degranulation. In concert with the BLOC-1 complex, AP-3 is required to target cargos into vesicles assembled at cell bodies for delivery into neurites and nerve terminals. The protein is AP-3 complex subunit delta-1 (AP3D1) of Bos taurus (Bovine).